The following is a 179-amino-acid chain: Large ribosomal subunit protein uL6 (179 aa).

It belongs to the universal ribosomal protein uL6 family. As to quaternary structure, part of the 50S ribosomal subunit.

In terms of biological role, this protein binds to the 23S rRNA, and is important in its secondary structure. It is located near the subunit interface in the base of the L7/L12 stalk, and near the tRNA binding site of the peptidyltransferase center. This Bifidobacterium animalis subsp. lactis (strain AD011) protein is Large ribosomal subunit protein uL6.